The following is a 116-amino-acid chain: Large ribosomal subunit protein bL19 (116 aa).

The protein belongs to the bacterial ribosomal protein bL19 family.

Its function is as follows. This protein is located at the 30S-50S ribosomal subunit interface and may play a role in the structure and function of the aminoacyl-tRNA binding site. The protein is Large ribosomal subunit protein bL19 of Staphylococcus haemolyticus (strain JCSC1435).